The following is a 209-amino-acid chain: Uracil phosphoribosyltransferase (209 aa).

Residues Arg79, Arg104, and 131 to 139 each bind 5-phospho-alpha-D-ribose 1-diphosphate; that span reads DPMLATGGS. Residues Ile194 and 199–201 contribute to the uracil site; that span reads GDA. A 5-phospho-alpha-D-ribose 1-diphosphate-binding site is contributed by Asp200.

This sequence belongs to the UPRTase family. Requires Mg(2+) as cofactor.

It catalyses the reaction UMP + diphosphate = 5-phospho-alpha-D-ribose 1-diphosphate + uracil. It functions in the pathway pyrimidine metabolism; UMP biosynthesis via salvage pathway; UMP from uracil: step 1/1. Allosterically activated by GTP. Functionally, catalyzes the conversion of uracil and 5-phospho-alpha-D-ribose 1-diphosphate (PRPP) to UMP and diphosphate. The protein is Uracil phosphoribosyltransferase of Lysinibacillus sphaericus (strain C3-41).